The sequence spans 470 residues: Methylenetetrahydrofolate--tRNA-(uracil-5-)-methyltransferase TrmFO (470 aa).

10–15 serves as a coordination point for FAD; sequence GAGLAG.

Belongs to the MnmG family. TrmFO subfamily. Requires FAD as cofactor.

The protein resides in the cytoplasm. It catalyses the reaction uridine(54) in tRNA + (6R)-5,10-methylene-5,6,7,8-tetrahydrofolate + NADH + H(+) = 5-methyluridine(54) in tRNA + (6S)-5,6,7,8-tetrahydrofolate + NAD(+). The catalysed reaction is uridine(54) in tRNA + (6R)-5,10-methylene-5,6,7,8-tetrahydrofolate + NADPH + H(+) = 5-methyluridine(54) in tRNA + (6S)-5,6,7,8-tetrahydrofolate + NADP(+). Catalyzes the folate-dependent formation of 5-methyl-uridine at position 54 (M-5-U54) in all tRNAs. The chain is Methylenetetrahydrofolate--tRNA-(uracil-5-)-methyltransferase TrmFO from Prochlorococcus marinus (strain MIT 9301).